The primary structure comprises 251 residues: HTH-type transcriptional regulator UlaR (251 aa).

The region spanning 3-58 (EAQRHQILLEMLAQLGFVTVEKVVERLGISPATARRDINKLDESGKLKKVRNGAEA) is the HTH deoR-type domain. Residues 20-39 (VTVEKVVERLGISPATARRD) constitute a DNA-binding region (H-T-H motif).

The protein resides in the cytoplasm. In terms of biological role, represses ulaG and the ulaABCDEF operon. This is HTH-type transcriptional regulator UlaR from Escherichia coli (strain SMS-3-5 / SECEC).